The sequence spans 377 residues: Nitric oxide reductase FlRd-NAD(+) reductase (377 aa).

This sequence belongs to the FAD-dependent oxidoreductase family. The cofactor is FAD.

The protein resides in the cytoplasm. It carries out the reaction 2 reduced [nitric oxide reductase rubredoxin domain] + NAD(+) + H(+) = 2 oxidized [nitric oxide reductase rubredoxin domain] + NADH. It participates in nitrogen metabolism; nitric oxide reduction. Functionally, one of at least two accessory proteins for anaerobic nitric oxide (NO) reductase. Reduces the rubredoxin moiety of NO reductase. The protein is Nitric oxide reductase FlRd-NAD(+) reductase of Salmonella typhimurium (strain LT2 / SGSC1412 / ATCC 700720).